We begin with the raw amino-acid sequence, 325 residues long: tRNA U34 carboxymethyltransferase (325 aa).

Carboxy-S-adenosyl-L-methionine is bound by residues lysine 91, tryptophan 105, lysine 110, glycine 130, 152-154, methionine 196, tyrosine 200, and arginine 315; that span reads DPS.

This sequence belongs to the class I-like SAM-binding methyltransferase superfamily. CmoB family. As to quaternary structure, homotetramer.

The catalysed reaction is carboxy-S-adenosyl-L-methionine + 5-hydroxyuridine(34) in tRNA = 5-carboxymethoxyuridine(34) in tRNA + S-adenosyl-L-homocysteine + H(+). Functionally, catalyzes carboxymethyl transfer from carboxy-S-adenosyl-L-methionine (Cx-SAM) to 5-hydroxyuridine (ho5U) to form 5-carboxymethoxyuridine (cmo5U) at position 34 in tRNAs. The polypeptide is tRNA U34 carboxymethyltransferase (Aeromonas hydrophila subsp. hydrophila (strain ATCC 7966 / DSM 30187 / BCRC 13018 / CCUG 14551 / JCM 1027 / KCTC 2358 / NCIMB 9240 / NCTC 8049)).